A 200-amino-acid chain; its full sequence is LHFPL tetraspan subfamily member 6 protein (200 aa).

Positions 1-23 (MASSLTCTGVIWALLSFLSAATS) are cleaved as a signal peptide. Transmembrane regions (helical) follow at residues 84–104 (ICTI…LTAL), 123–143 (GIQF…PLGW), and 166–186 (IGWA…LCTW).

Belongs to the LHFP family.

The protein resides in the membrane. The sequence is that of LHFPL tetraspan subfamily member 6 protein from Rattus norvegicus (Rat).